Consider the following 302-residue polypeptide: Myeloid-associated differentiation marker-like protein 2 (302 aa).

2 MARVEL domains span residues 13 to 149 (AIWS…AKPG) and 154 to 298 (YMAT…RLRI). Transmembrane regions (helical) follow at residues 45-65 (AYGT…ILIV), 87-107 (AYAM…PMYF), 124-144 (LAVS…VFLT), 158-178 (ASGL…GALA), 191-211 (WCVA…ILNI), 225-245 (FVVI…VIWP), and 273-293 (LAVT…LIYT).

This sequence belongs to the MAL family.

The protein localises to the membrane. This Xenopus laevis (African clawed frog) protein is Myeloid-associated differentiation marker-like protein 2 (myadml2).